The sequence spans 612 residues: Isocitrate dehydrogenase kinase/phosphatase (612 aa).

Residues 327–333 (APGIKGL) and Lys-348 contribute to the ATP site. Asp-383 is a catalytic residue. Positions 593 to 612 (AGAASNEQDAPDAGRSVRAA) are disordered.

The protein belongs to the AceK family.

The protein localises to the cytoplasm. The catalysed reaction is L-seryl-[isocitrate dehydrogenase] + ATP = O-phospho-L-seryl-[isocitrate dehydrogenase] + ADP + H(+). Its function is as follows. Bifunctional enzyme which can phosphorylate or dephosphorylate isocitrate dehydrogenase (IDH) on a specific serine residue. This is a regulatory mechanism which enables bacteria to bypass the Krebs cycle via the glyoxylate shunt in response to the source of carbon. When bacteria are grown on glucose, IDH is fully active and unphosphorylated, but when grown on acetate or ethanol, the activity of IDH declines drastically concomitant with its phosphorylation. This Paraburkholderia xenovorans (strain LB400) protein is Isocitrate dehydrogenase kinase/phosphatase.